The primary structure comprises 297 residues: MKRPDYRTLQALDAVIRERGFERAAQKLCITQSAVSQRIKQLENMFGQPLLVRTVPPRPTEQGQKLLALLRQVELLEEEWLGDEQTGSTPLLLSLAVNADSLATWLLPALAPVLADSPIRLNLQVEDETRTQERLRRGEVVGAVSIQHQALPSCLVDKLGALDYLFVASRPFAERYFPNGVTRSSLLKAPAVAFDHLDDMHQAFLQQNFDLPPGSVPCHIVNSSEAFVQLARQGTTCCMIPHLQIEKELESGELINLTPGLLQRRMLYWHRFAPESRMMRKVTDALLEYGHKVLRQD.

An HTH lysR-type domain is found at 4–60 (PDYRTLQALDAVIRERGFERAAQKLCITQSAVSQRIKQLENMFGQPLLVRTVPPRPT). Residues 21 to 40 (FERAAQKLCITQSAVSQRIK) constitute a DNA-binding region (H-T-H motif).

This sequence belongs to the LysR transcriptional regulatory family. Homodimer.

Functionally, controls the transcription of genes involved in arginine and lysine metabolism. The polypeptide is HTH-type transcriptional regulator ArgP (Salmonella dublin (strain CT_02021853)).